We begin with the raw amino-acid sequence, 205 residues long: Large ribosomal subunit protein uL3 (205 aa).

It belongs to the universal ribosomal protein uL3 family. As to quaternary structure, part of the 50S ribosomal subunit. Forms a cluster with proteins L14 and L19.

Functionally, one of the primary rRNA binding proteins, it binds directly near the 3'-end of the 23S rRNA, where it nucleates assembly of the 50S subunit. The chain is Large ribosomal subunit protein uL3 from Flavobacterium johnsoniae (strain ATCC 17061 / DSM 2064 / JCM 8514 / BCRC 14874 / CCUG 350202 / NBRC 14942 / NCIMB 11054 / UW101) (Cytophaga johnsonae).